Here is a 392-residue protein sequence, read N- to C-terminus: Mycofactocin maturase MftC (392 aa).

Residues 18–228 (LDAPICLTWE…YDWLVAKGDR (211 aa)) form the Radical SAM core domain. The [4Fe-4S] cluster site is built by Cys32, Cys36, Cys39, Cys253, Cys260, Cys271, Cys312, Cys315, Cys321, Cys325, and Cys343. Basic and acidic residues predominate over residues 354–367 (KERVKPKPSGDHSR). A disordered region spans residues 354 to 377 (KERVKPKPSGDHSRGTKQGPVALK).

This sequence belongs to the radical SAM superfamily. MftC family. It depends on [4Fe-4S] cluster as a cofactor.

It catalyses the reaction [mycofactocin precursor peptide]-C-terminal glycyl-L-valyl-L-tyrosine + S-adenosyl-L-methionine = [mycofactocin precursor peptide]-C-terminal glycyl-N-{[2-(4-hydroxyphenyl)ethenyl]-3-methylbutanamide} + 5'-deoxyadenosine + L-methionine + CO2. The enzyme catalyses [mycofactocin precursor peptide]-C-terminal glycyl-N-{[2-(4-hydroxyphenyl)ethenyl]-3-methylbutanamide} + AH2 + S-adenosyl-L-methionine = [mycofactocin precursor peptide]-C-terminal glycyl-N-{5-[(4-hydroxyphenyl)methyl]-4,4-dimethyl-2-oxopyrrolidin-3-yl}acetamide + 5'-deoxyadenosine + L-methionine + A + H(+). In terms of biological role, radical S-adenosylmethionine (SAM) enzyme responsible for the first step of the biosynthesis of the enzyme cofactor mycofactocin (MFT). Catalyzes two reactions at the C-terminus of the mycofactocin precursor (the MftA peptide). The first one is the oxidative decarboxylation of the C-terminal L-tyrosine of MftA, forming an unsaturated tyramine moiety. The second reaction is the cross-linking of the tyramine with the penultimate L-valine residue, forming a five-membered lactam ring. Its activity requires the presence of the MftB chaperone. Is required for the in vivo ethanol assimilation in M.smegmatis. The chain is Mycofactocin maturase MftC from Mycolicibacterium smegmatis (strain ATCC 700084 / mc(2)155) (Mycobacterium smegmatis).